A 483-amino-acid polypeptide reads, in one-letter code: Alginate biosynthesis protein AlgA (483 aa).

Belongs to the mannose-6-phosphate isomerase type 2 family. Monomer. Co(2+) serves as cofactor.

It carries out the reaction D-mannose 6-phosphate = D-fructose 6-phosphate. The enzyme catalyses alpha-D-mannose 1-phosphate + GTP + H(+) = GDP-alpha-D-mannose + diphosphate. It participates in nucleotide-sugar biosynthesis; GDP-alpha-D-mannose biosynthesis; GDP-alpha-D-mannose from alpha-D-mannose 1-phosphate (GTP route): step 1/1. The protein operates within nucleotide-sugar biosynthesis; GDP-alpha-D-mannose biosynthesis; alpha-D-mannose 1-phosphate from D-fructose 6-phosphate: step 1/2. Functionally, produces a precursor for alginate polymerization. The alginate layer provides a protective barrier against host immune defenses and antibiotics. This is Alginate biosynthesis protein AlgA (algA) from Pseudomonas syringae pv. tomato (strain ATCC BAA-871 / DC3000).